The sequence spans 396 residues: MSNDFLFTSESVSEGHPDKVADQISDAILDAILAQDKYARVAAETLCNTGLVVLAGEITTTANVDYIHVARETIKRIGYDNTEYGIDYKGCAVLVAYDKQSPDIAQGVDRASDDYLNQGAGDQGLMFGYACDETPELMPFPIYYAHRLVERQSQLRRDGRLPWLRPDAKSQVTVRYVDGKPHSVDTVVLSTQHAPEMSQEAIREAVIEEIIKPVLPSHMLAETKYLVNPTGRFVIGGPQGDCGLTGRKIIVDTYGGAAPHGGGAFSGKDPSKVDRSAAYAARYVAKNVVAAGLARQCQVQVSYAIGVARPINITVYTEGTGVIPDEQIAKLVQEHFDLRPKGIVQMLDLLRPVYEKTAAYGHFGREEPEFSWEATDKVLLLREAAGLAGEPAKAFA.

H16 lines the ATP pocket. D18 serves as a coordination point for Mg(2+). E44 contacts K(+). Positions 57 and 100 each coordinate L-methionine. The interval 100–110 (QSPDIAQGVDR) is flexible loop. ATP is bound by residues 167-169 (DAK), 232-233 (RF), D241, 247-248 (RK), A264, and K268. D241 is an L-methionine binding site. K272 contacts L-methionine.

The protein belongs to the AdoMet synthase family. As to quaternary structure, homotetramer; dimer of dimers. It depends on Mg(2+) as a cofactor. The cofactor is K(+).

The protein resides in the cytoplasm. The enzyme catalyses L-methionine + ATP + H2O = S-adenosyl-L-methionine + phosphate + diphosphate. Its pathway is amino-acid biosynthesis; S-adenosyl-L-methionine biosynthesis; S-adenosyl-L-methionine from L-methionine: step 1/1. Catalyzes the formation of S-adenosylmethionine (AdoMet) from methionine and ATP. The overall synthetic reaction is composed of two sequential steps, AdoMet formation and the subsequent tripolyphosphate hydrolysis which occurs prior to release of AdoMet from the enzyme. In Ralstonia pickettii (strain 12J), this protein is S-adenosylmethionine synthase.